Here is a 322-residue protein sequence, read N- to C-terminus: Mitochondrial thiamine pyrophosphate carrier 1 (322 aa).

Solcar repeat units follow at residues 12–111 (GSKT…VTLG), 122–208 (PAAA…LRLP), and 215–310 (PFGS…VLGI). 6 helical membrane passes run 18 to 38 (MIAG…LDVV), 92 to 108 (LMYV…YRSV), 128 to 148 (FIAG…LDLL), 180 to 200 (FFQG…IFFA), 221 to 241 (ASAG…FDLI), and 285 to 302 (GLTV…VTMW).

It belongs to the mitochondrial carrier (TC 2.A.29) family.

The protein resides in the mitochondrion inner membrane. Mitochondrial transporter that mediates uptake of thiamine pyrophosphate (ThPP) into mitochondria. The protein is Mitochondrial thiamine pyrophosphate carrier 1 (tpc1) of Botryotinia fuckeliana (strain B05.10) (Noble rot fungus).